We begin with the raw amino-acid sequence, 884 residues long: Alanine--tRNA ligase (884 aa).

The Zn(2+) site is built by histidine 565, histidine 569, cysteine 672, and histidine 676.

The protein belongs to the class-II aminoacyl-tRNA synthetase family. Zn(2+) is required as a cofactor.

The protein resides in the cytoplasm. It catalyses the reaction tRNA(Ala) + L-alanine + ATP = L-alanyl-tRNA(Ala) + AMP + diphosphate. In terms of biological role, catalyzes the attachment of alanine to tRNA(Ala) in a two-step reaction: alanine is first activated by ATP to form Ala-AMP and then transferred to the acceptor end of tRNA(Ala). Also edits incorrectly charged Ser-tRNA(Ala) and Gly-tRNA(Ala) via its editing domain. The polypeptide is Alanine--tRNA ligase (Sphingopyxis alaskensis (strain DSM 13593 / LMG 18877 / RB2256) (Sphingomonas alaskensis)).